Reading from the N-terminus, the 443-residue chain is Minovincinine 19-hydroxy-O-acetyltransferase (443 aa).

The active-site Proton acceptor is the His157. Positions 215 to 222 (RKRFLFSP) match the Nuclear localization signal motif. Residues 316-343 (TKLVIGELRKAKDKLKNLSQEKLNYVAR) are a coiled coil. Asp384 serves as the catalytic Proton acceptor.

The protein belongs to the plant acyltransferase family. In terms of assembly, monomer. In terms of tissue distribution, expressed in cortical cells of the root tip, especially in hairy roots, as well as in etiolated seedlings. Mostly expressed in roots, and, at lower levels, in leaves.

Its subcellular location is the cytoplasm. The protein resides in the nucleus. The catalysed reaction is (+)-minovincinine + acetyl-CoA = (+)-echitovenine + CoA. Its pathway is alkaloid biosynthesis. In terms of biological role, component of the monoterpenoid indole alkaloids (MIAs, e.g. echitovenine, tabersonine, lochnericine, 19-hydroxytabersonine and horhammericine) biosynthetic pathway; MIAs are used in cancer treatment and other medical applications. Acyltransferase catalyzing the conversion of (+)-minovincinine to (+)-echitovenine. The sequence is that of Minovincinine 19-hydroxy-O-acetyltransferase from Catharanthus roseus (Madagascar periwinkle).